Consider the following 468-residue polypeptide: ATP synthase subunit beta (468 aa).

155 to 162 is an ATP binding site; the sequence is GGAGVGKT.

Belongs to the ATPase alpha/beta chains family. In terms of assembly, F-type ATPases have 2 components, CF(1) - the catalytic core - and CF(0) - the membrane proton channel. CF(1) has five subunits: alpha(3), beta(3), gamma(1), delta(1), epsilon(1). CF(0) has three main subunits: a(1), b(2) and c(9-12). The alpha and beta chains form an alternating ring which encloses part of the gamma chain. CF(1) is attached to CF(0) by a central stalk formed by the gamma and epsilon chains, while a peripheral stalk is formed by the delta and b chains.

Its subcellular location is the cell inner membrane. The enzyme catalyses ATP + H2O + 4 H(+)(in) = ADP + phosphate + 5 H(+)(out). Produces ATP from ADP in the presence of a proton gradient across the membrane. The catalytic sites are hosted primarily by the beta subunits. The sequence is that of ATP synthase subunit beta from Bdellovibrio bacteriovorus (strain ATCC 15356 / DSM 50701 / NCIMB 9529 / HD100).